The sequence spans 2136 residues: U5 small nuclear ribonucleoprotein 200 kDa helicase (2136 aa).

Phosphoserine occurs at positions 17 and 26. Residue Lys-46 forms a Glycyl lysine isopeptide (Lys-Gly) (interchain with G-Cter in SUMO2) linkage. The interval Thr-50–Asp-80 is disordered. The stretch at Asp-54 to Met-84 forms a coiled coil. At Ser-225 the chain carries Phosphoserine. A Phosphothreonine modification is found at Thr-389. Residues Asp-395–Ala-2129 are interaction with C9orf78 and WBP4. Positions Arg-490–Leu-673 constitute a Helicase ATP-binding 1 domain. Ala-503–Thr-510 provides a ligand contact to ATP. Residues Asp-615–His-618 carry the DEIH box motif. The region spanning Pro-684 to Gly-921 is the Helicase C-terminal 1 domain. Tyr-709 bears the Phosphotyrosine mark. Lys-971 bears the N6-acetyllysine mark. The 306-residue stretch at Val-981 to Phe-1286 folds into the SEC63 1 domain. The interval Leu-1282–Asp-2136 is interaction with TSSC4. A Helicase ATP-binding 2 domain is found at Asn-1337–Phe-1512. Residue Ala-1350–Thr-1357 coordinates ATP. At Thr-1428 the chain carries Phosphothreonine. A DEVH box motif is present at residues Asp-1454–His-1457. The 209-residue stretch at Pro-1545–Asp-1753 folds into the Helicase C-terminal 2 domain. Thr-1765 is modified (phosphothreonine). The SEC63 2 domain occupies Pro-1812–Val-2124. Phosphoserine is present on Ser-2002. Position 2131 is a phosphothreonine (Thr-2131). 2 positions are modified to phosphoserine: Ser-2133 and Ser-2135.

This sequence belongs to the helicase family. SKI2 subfamily. As to quaternary structure, component of a core complex containing at least PRPF8, SNRNP200, EFTUD2 and SNRNP40. Component of the U5 snRNP and U4/U6-U5 tri-snRNP complexes, building blocks of the spliceosome. Component of the U4/U6-U5 tri-snRNP complex composed of the U4, U6 and U5 snRNAs and at least PRPF3, PRPF4, PRPF6, PRPF8, PRPF31, SNRNP200, TXNL4A, SNRNP40, DDX23, CD2BP2, PPIH, SNU13, EFTUD2, SART1 and USP39. Component of precatalytic, catalytic and postcatalytic spliceosomal complexes. Component of the minor spliceosome, which splices U12-type introns. Interacts with C9orf78; the interaction is direct and mutually exclusive with its interaction with WBP4. Interacts with WBP4; the interaction is mutually exclusive with its interaction with C9orf78. Interacts with PRPF8. Interacts with TSSC4; the interaction is direct, excludes recruitment of C9ORF78 and WBP4 to SNRNP200 and negatively regulates its RNA helicase activity. Widely expressed.

It localises to the nucleus. The enzyme catalyses ATP + H2O = ADP + phosphate + H(+). In terms of biological role, catalyzes the ATP-dependent unwinding of U4/U6 RNA duplices, an essential step in the assembly of a catalytically active spliceosome. Plays a role in pre-mRNA splicing as a core component of precatalytic, catalytic and postcatalytic spliceosomal complexes. As a component of the minor spliceosome, involved in the splicing of U12-type introns in pre-mRNAs. Involved in spliceosome assembly, activation and disassembly. Mediates changes in the dynamic network of RNA-RNA interactions in the spliceosome. This chain is U5 small nuclear ribonucleoprotein 200 kDa helicase (SNRNP200), found in Homo sapiens (Human).